Consider the following 103-residue polypeptide: Acyl carrier protein homolog (103 aa).

In terms of domain architecture, Carrier spans 3–87; that stretch reads ELTSEIKKEI…ETLEKVVQTT (85 aa). Ser45 carries the post-translational modification O-(pantetheine 4'-phosphoryl)serine.

In terms of processing, 4'-phosphopantetheine is transferred from CoA to a specific serine of the apo-ACP-like protein.

The protein resides in the cytoplasm. Functionally, acyl carrier protein. The chain is Acyl carrier protein homolog from Clostridium acetobutylicum (strain ATCC 824 / DSM 792 / JCM 1419 / IAM 19013 / LMG 5710 / NBRC 13948 / NRRL B-527 / VKM B-1787 / 2291 / W).